Consider the following 101-residue polypeptide: Large ribosomal subunit protein uL24 (101 aa).

This sequence belongs to the universal ribosomal protein uL24 family. As to quaternary structure, part of the 50S ribosomal subunit.

In terms of biological role, one of two assembly initiator proteins, it binds directly to the 5'-end of the 23S rRNA, where it nucleates assembly of the 50S subunit. Functionally, one of the proteins that surrounds the polypeptide exit tunnel on the outside of the subunit. The sequence is that of Large ribosomal subunit protein uL24 from Streptococcus pyogenes serotype M1.